Consider the following 358-residue polypeptide: 5-amino-6-(D-ribitylamino)uracil--L-tyrosine 4-hydroxyphenyl transferase 2 (358 aa).

Positions 45–292 constitute a Radical SAM core domain; sequence VTFVKNTNIE…ESIKNIQAPR (248 aa). Residues cysteine 59, cysteine 63, and cysteine 66 each coordinate [4Fe-4S] cluster.

The protein belongs to the radical SAM superfamily. CofH family. In terms of assembly, consists of two subunits, CofG and CofH. [4Fe-4S] cluster serves as cofactor.

It carries out the reaction 5-amino-6-(D-ribitylamino)uracil + L-tyrosine + S-adenosyl-L-methionine = 5-amino-5-(4-hydroxybenzyl)-6-(D-ribitylimino)-5,6-dihydrouracil + 2-iminoacetate + 5'-deoxyadenosine + L-methionine + H(+). The protein operates within cofactor biosynthesis; coenzyme F0 biosynthesis. In terms of biological role, catalyzes the radical-mediated synthesis of 5-amino-5-(4-hydroxybenzyl)-6-(D-ribitylimino)-5,6-dihydrouracil from 5-amino-6-(D-ribitylamino)uracil and L-tyrosine. The chain is 5-amino-6-(D-ribitylamino)uracil--L-tyrosine 4-hydroxyphenyl transferase 2 from Methanococcus maripaludis (strain DSM 14266 / JCM 13030 / NBRC 101832 / S2 / LL).